We begin with the raw amino-acid sequence, 633 residues long: 1-deoxy-D-xylulose-5-phosphate synthase (633 aa).

Thiamine diphosphate is bound by residues histidine 72 and 113–115 (GHS). Aspartate 144 contacts Mg(2+). Thiamine diphosphate-binding positions include 145 to 146 (GA), asparagine 173, tyrosine 284, and glutamate 367. Asparagine 173 serves as a coordination point for Mg(2+).

It belongs to the transketolase family. DXPS subfamily. Homodimer. The cofactor is Mg(2+). It depends on thiamine diphosphate as a cofactor.

The enzyme catalyses D-glyceraldehyde 3-phosphate + pyruvate + H(+) = 1-deoxy-D-xylulose 5-phosphate + CO2. It participates in metabolic intermediate biosynthesis; 1-deoxy-D-xylulose 5-phosphate biosynthesis; 1-deoxy-D-xylulose 5-phosphate from D-glyceraldehyde 3-phosphate and pyruvate: step 1/1. Functionally, catalyzes the acyloin condensation reaction between C atoms 2 and 3 of pyruvate and glyceraldehyde 3-phosphate to yield 1-deoxy-D-xylulose-5-phosphate (DXP). This chain is 1-deoxy-D-xylulose-5-phosphate synthase, found in Lysinibacillus sphaericus (strain C3-41).